The chain runs to 106 residues: Pyrimidine/purine nucleoside phosphorylase (106 aa).

Belongs to the nucleoside phosphorylase PpnP family.

It catalyses the reaction a purine D-ribonucleoside + phosphate = a purine nucleobase + alpha-D-ribose 1-phosphate. The enzyme catalyses adenosine + phosphate = alpha-D-ribose 1-phosphate + adenine. It carries out the reaction cytidine + phosphate = cytosine + alpha-D-ribose 1-phosphate. The catalysed reaction is guanosine + phosphate = alpha-D-ribose 1-phosphate + guanine. It catalyses the reaction inosine + phosphate = alpha-D-ribose 1-phosphate + hypoxanthine. The enzyme catalyses thymidine + phosphate = 2-deoxy-alpha-D-ribose 1-phosphate + thymine. It carries out the reaction uridine + phosphate = alpha-D-ribose 1-phosphate + uracil. The catalysed reaction is xanthosine + phosphate = alpha-D-ribose 1-phosphate + xanthine. In terms of biological role, catalyzes the phosphorolysis of diverse nucleosides, yielding D-ribose 1-phosphate and the respective free bases. Can use uridine, adenosine, guanosine, cytidine, thymidine, inosine and xanthosine as substrates. Also catalyzes the reverse reactions. The sequence is that of Pyrimidine/purine nucleoside phosphorylase from Burkholderia ambifaria (strain MC40-6).